Consider the following 501-residue polypeptide: Ammonium transporter 2 member 2 (501 aa).

11 helical membrane-spanning segments follow: residues 35–55, 64–84, 140–160, 174–194, 203–223, 238–258, 274–294, 298–318, 322–342, 356–376, and 412–432; these read VAAT…YGSI, SAFM…LVGF, LVLF…GSLL, LWLL…GFLY, GGYV…YWVG, ILLM…FNGG, TNVS…IFFG, VIGA…GAGL, WSAM…MMIL, LAVF…TGLL, and FVTV…GLFI.

Belongs to the ammonia transporter channel (TC 1.A.11.2) family.

The protein localises to the membrane. Its function is as follows. Involved in ammonium transport. This chain is Ammonium transporter 2 member 2 (AMT2-2), found in Oryza sativa subsp. japonica (Rice).